The chain runs to 348 residues: MNMTQARLLVAAVVGLVAILLYASIHKIEEGHLAVYYRGGALLTSPSGPGYHIMLPFITTFRSVQTTLQTDEVKNVPCGTSGGVMIYIDRIEVVNMLAPYAVFDIVRNYTADYDKTLIFNKIHHELNQFCSAHTLQEVYIELFDQIDENLKQALQKDLNTMAPGLTIQAVRVTKPKIPEAIRRNFELMEAEKTKLLIAAQKQKVVEKEAETERKRAVIEAEKIAQVAKIRFQQKVMEKETEKRISEIEDAAFLAREKAKADAEYYAAHKYATSNKHKLTPEYLELKKYQAIASNSKIYFGSNIPSMFVDSSCALKYSDGRTGREDSLPPEEAREPSGESPIQNKENAG.

Residues 1–7 are Cytoplasmic-facing; that stretch reads MNMTQAR. The chain crosses the membrane as a helical span at residues 8 to 28; that stretch reads LLVAAVVGLVAILLYASIHKI. Topologically, residues 29–348 are lumenal; sequence EEGHLAVYYR…SPIQNKENAG (320 aa). N108 carries an N-linked (GlcNAc...) asparagine glycan. K269 carries the N6-acetyllysine modification. Positions 318–336 are enriched in basic and acidic residues; the sequence is DGRTGREDSLPPEEAREPS. Residues 318-348 are disordered; the sequence is DGRTGREDSLPPEEAREPSGESPIQNKENAG. Over residues 339–348 the composition is skewed to polar residues; the sequence is SPIQNKENAG.

This sequence belongs to the band 7/mec-2 family. Forms a heteromeric complex with ERLIN2. In complex with ERLIN2, interacts with RNF170. Interacts with AMFR and SYVN1. Post-translationally, deubiquitinated by USP25; leading to stabilization.

It is found in the endoplasmic reticulum membrane. In terms of biological role, component of the ERLIN1/ERLIN2 complex which mediates the endoplasmic reticulum-associated degradation (ERAD) of inositol 1,4,5-trisphosphate receptors (IP3Rs). Involved in regulation of cellular cholesterol homeostasis by regulation the SREBP signaling pathway. Binds cholesterol and may promote ER retention of the SCAP-SREBF complex. The protein is Erlin-1 of Mus musculus (Mouse).